Here is a 397-residue protein sequence, read N- to C-terminus: Succinyl-diaminopimelate desuccinylase (397 aa).

H73 contributes to the Zn(2+) binding site. D75 is an active-site residue. D106 serves as a coordination point for Zn(2+). E140 functions as the Proton acceptor in the catalytic mechanism. Positions 141, 169, and 366 each coordinate Zn(2+).

Belongs to the peptidase M20A family. DapE subfamily. As to quaternary structure, homodimer. Zn(2+) is required as a cofactor. Requires Co(2+) as cofactor.

It carries out the reaction N-succinyl-(2S,6S)-2,6-diaminopimelate + H2O = (2S,6S)-2,6-diaminopimelate + succinate. It functions in the pathway amino-acid biosynthesis; L-lysine biosynthesis via DAP pathway; LL-2,6-diaminopimelate from (S)-tetrahydrodipicolinate (succinylase route): step 3/3. Its function is as follows. Catalyzes the hydrolysis of N-succinyl-L,L-diaminopimelic acid (SDAP), forming succinate and LL-2,6-diaminopimelate (DAP), an intermediate involved in the bacterial biosynthesis of lysine and meso-diaminopimelic acid, an essential component of bacterial cell walls. The polypeptide is Succinyl-diaminopimelate desuccinylase (Rhizobium etli (strain ATCC 51251 / DSM 11541 / JCM 21823 / NBRC 15573 / CFN 42)).